A 256-amino-acid polypeptide reads, in one-letter code: Protein CUSTOS (256 aa).

Residues Met-1–Ser-19 show a composition bias toward low complexity. Disordered stretches follow at residues Met-1 to Phe-83, Phe-127 to Arg-163, and Ile-227 to Asn-256. Position 62 is a phosphoserine (Ser-62). Over residues Arg-63 to Phe-83 the composition is skewed to basic and acidic residues. Thr-80 carries the phosphothreonine modification. The residue at position 139 (Ser-139) is a Phosphoserine. Positions Gln-228–Ala-235 match the Nucleolar localization signal (NLS) motif. A compositionally biased stretch (basic residues) spans Gln-228–Lys-237. Residues Pro-246–Asn-256 are compositionally biased toward low complexity.

The protein belongs to the CUSTOS family.

The protein resides in the nucleus envelope. Functionally, plays a role in the regulation of Wnt signaling pathway during early development. This Mus musculus (Mouse) protein is Protein CUSTOS.